The primary structure comprises 20 residues: Antimicrobial peptide EP-20 (20 aa).

Positions 1–20 (EGPVGLADPDGPASAPLGAP) are disordered.

It localises to the secreted. In terms of biological role, the synthetic peptide inhibits growth of fungus P.capsici and partially that of V.dahliae, F.graminearum and F.omysporum. This Xenorhabdus budapestensis protein is Antimicrobial peptide EP-20.